The following is a 543-amino-acid chain: Efflux pump mokI (543 aa).

Helical transmembrane passes span 30–50, 90–110, 125–145, 153–173, 185–205, 233–253, 261–281, 307–327, 340–360, 364–384, 394–416, 428–448, and 509–529; these read LVVT…SIIV, LLTL…GSAL, AVAG…LASA, LLIG…PLLG, CFYI…AIHI, LLGF…LEWG, SSVI…FGFW, LFLG…PIYF, VYML…GAII, GYYI…AGLV, AAWV…TPII, ALGI…FLTL, and VGAS…GLIW.

Belongs to the major facilitator superfamily. TCR/Tet family.

The protein localises to the membrane. Functionally, efflux pump; part of the gene cluster that mediates the biosynthesis of monakolin K, also known as lovastatin, and which acts as a potent competitive inhibitor of HMG-CoA reductase. The polypeptide is Efflux pump mokI (Monascus pilosus (Red mold)).